The primary structure comprises 61 residues: Myrmicitoxin(1)-Pm5a (61 aa).

The first 23 residues, 1 to 23, serve as a signal peptide directing secretion; the sequence is MKAIIFLFAVLTVVAIIIPIISG. Residues 24–33 constitute a propeptide that is removed on maturation; that stretch reads EPNAGPLAAS. Residue glutamine 60 is modified to Glutamine amide.

This sequence belongs to the formicidae venom clade 2 family. In terms of tissue distribution, expressed by the venom gland.

Its subcellular location is the secreted. Its function is as follows. Toxin that causes a rapid and irreversible paralysis when intrathoracically injected into insects (blowflies). Does not cause spontaneous nocifensive behaviors by intraplantar injection in mice. The protein is Myrmicitoxin(1)-Pm5a of Pogonomyrmex maricopa (Maricopa harvester ant).